The primary structure comprises 443 residues: Chromosomal replication initiator protein DnaA (443 aa).

The interval 1-80 (MFLEEKLNLV…ETCGDKIPVE (80 aa)) is domain I, interacts with DnaA modulators. Residues 80–104 (EILIETKAASPLQSILEKSFDQKDF) form a domain II region. Residues 105-321 (QFNPDYTFET…GALNDIYLYK (217 aa)) are domain III, AAA+ region. Residues Gly-148, Gly-150, Lys-151, and Thr-152 each contribute to the ATP site. The segment at 322–443 (KSYSLLFLNL…ERISSKYKLQ (122 aa)) is domain IV, binds dsDNA.

This sequence belongs to the DnaA family. In terms of assembly, oligomerizes as a right-handed, spiral filament on DNA at oriC.

It is found in the cytoplasm. In terms of biological role, plays an essential role in the initiation and regulation of chromosomal replication. ATP-DnaA binds to the origin of replication (oriC) to initiate formation of the DNA replication initiation complex once per cell cycle. Binds the DnaA box (a 9 base pair repeat at the origin) and separates the double-stranded (ds)DNA. Forms a right-handed helical filament on oriC DNA; dsDNA binds to the exterior of the filament while single-stranded (ss)DNA is stabiized in the filament's interior. The ATP-DnaA-oriC complex binds and stabilizes one strand of the AT-rich DNA unwinding element (DUE), permitting loading of DNA polymerase. After initiation quickly degrades to an ADP-DnaA complex that is not apt for DNA replication. Binds acidic phospholipids. The protein is Chromosomal replication initiator protein DnaA of Leptospira interrogans serogroup Icterohaemorrhagiae serovar copenhageni (strain Fiocruz L1-130).